A 258-amino-acid polypeptide reads, in one-letter code: Tryptophan synthase alpha chain (258 aa).

Catalysis depends on proton acceptor residues Glu47 and Asp58.

It belongs to the TrpA family. Tetramer of two alpha and two beta chains.

The catalysed reaction is (1S,2R)-1-C-(indol-3-yl)glycerol 3-phosphate + L-serine = D-glyceraldehyde 3-phosphate + L-tryptophan + H2O. Its pathway is amino-acid biosynthesis; L-tryptophan biosynthesis; L-tryptophan from chorismate: step 5/5. The alpha subunit is responsible for the aldol cleavage of indoleglycerol phosphate to indole and glyceraldehyde 3-phosphate. The polypeptide is Tryptophan synthase alpha chain (Bacillus cereus (strain G9842)).